The sequence spans 150 residues: Small ribosomal subunit protein uS11z (150 aa).

Ser19 carries the post-translational modification Phosphoserine.

It belongs to the universal ribosomal protein uS11 family. As to quaternary structure, interacts with AAK6.

Its subcellular location is the cytoplasm. The chain is Small ribosomal subunit protein uS11z (RPS14A) from Arabidopsis thaliana (Mouse-ear cress).